Consider the following 147-residue polypeptide: Glucosamine 6-phosphate N-acetyltransferase (147 aa).

The 141-residue stretch at 7–147 folds into the N-acetyltransferase domain; it reads LELRVLEESD…AHERQMRLDL (141 aa). Residues threonine 28 and 86-88 each bind D-glucosamine 6-phosphate; that span reads EDV. Acetyl-CoA contacts are provided by residues 88–90 and 96–101; these read VVV and GAGLGK. Residues 117–118 and aspartate 122 contribute to the D-glucosamine 6-phosphate site; that span reads YK. 131 to 133 is an acetyl-CoA binding site; it reads YEK.

It belongs to the acetyltransferase family. GNA1 subfamily. As to quaternary structure, homodimer. Contains poly-N-acetyllactosamines.

Its subcellular location is the glycosome. The catalysed reaction is D-glucosamine 6-phosphate + acetyl-CoA = N-acetyl-D-glucosamine 6-phosphate + CoA + H(+). It functions in the pathway nucleotide-sugar biosynthesis; UDP-N-acetyl-alpha-D-glucosamine biosynthesis; N-acetyl-alpha-D-glucosamine 1-phosphate from alpha-D-glucosamine 6-phosphate (route I): step 1/2. Involved in the biosynthesis of UDP-N-acetyl-alpha-D-glucosamine. Catalyzes the formation of N-acetyl-D-glucosamine 6-phosphate from acetyl-coenzyme A (acetyl-CoA) and D-glucosamine 6-phosphate. The chain is Glucosamine 6-phosphate N-acetyltransferase from Trypanosoma brucei brucei.